Here is a 321-residue protein sequence, read N- to C-terminus: Peptide transport system permease protein SapB (321 aa).

At 1–8 (MIIFTLRR) the chain is on the cytoplasmic side. The chain crosses the membrane as a helical span at residues 9 to 29 (LLLLLVTLFFLTFIGFSLSYF). The Periplasmic portion of the chain corresponds to 30 to 80 (TPHAPLQGASLWNAWVFWFNGLLHWDFGVSSINGQLISEQLKEVFPATMEL). The 229-residue stretch at 74–302 (FPATMELCIL…SLVIVVNVIS (229 aa)) folds into the ABC transmembrane type-1 domain. Residues 81–101 (CILAFGFALMVGIPVGMLAGV) form a helical membrane-spanning segment. Topologically, residues 102 to 113 (TRSKWPDRFISA) are cytoplasmic. The chain crosses the membrane as a helical span at residues 114 to 134 (LALLGFSIPVFWLALLLTLFF). Residues 135–174 (SLTLGWLPVSGRFDLLYEVKPVTGFAIIDAWISDSPWRDE) are Periplasmic-facing. A helical membrane pass occupies residues 175 to 195 (MVMSAIRHMVLPVLTLSVAPT). The Cytoplasmic portion of the chain corresponds to 196 to 248 (TEVIRLMRISTIEVYDQNYVKAAATRGLSRFTILRRHVLHNALPPVIPRLGLQ). A helical transmembrane segment spans residues 249-269 (FSTMLTLAMITEMVFSWPGLG). Residues 270 to 280 (RWLIHAIRQQD) are Periplasmic-facing. Residues 281 to 301 (YAAISAGVMVIGSLVIVVNVI) form a helical membrane-spanning segment. The Cytoplasmic segment spans residues 302-321 (SDILGAMANPLKHKEWYALR).

Belongs to the binding-protein-dependent transport system permease family. OppBC subfamily.

It is found in the cell inner membrane. In terms of biological role, involved in a peptide intake transport system that plays a role in the resistance to antimicrobial peptides. The chain is Peptide transport system permease protein SapB from Salmonella typhimurium (strain LT2 / SGSC1412 / ATCC 700720).